We begin with the raw amino-acid sequence, 611 residues long: Chaperone protein HtpG (611 aa).

Positions M1–R326 are a; substrate-binding. A b region spans residues E327–R536. The tract at residues L537 to A611 is c.

The protein belongs to the heat shock protein 90 family. Homodimer.

Its subcellular location is the cytoplasm. Molecular chaperone. Has ATPase activity. The protein is Chaperone protein HtpG of Methylobacterium sp. (strain 4-46).